The following is a 373-amino-acid chain: Putative F-box protein At1g76830 (373 aa).

The region spanning 4 to 49 is the F-box domain; it reads ITSFENLPEELKREILLRMSPNSLVTCSRVSKKLASMIRTKSFKEL.

This chain is Putative F-box protein At1g76830, found in Arabidopsis thaliana (Mouse-ear cress).